A 30-amino-acid polypeptide reads, in one-letter code: Beta-endorphin-2 (30 aa).

N-acetyltyrosine is present on Y1.

Belongs to the POMC family.

Its subcellular location is the secreted. The protein is Beta-endorphin-2 of Oncorhynchus keta (Chum salmon).